The chain runs to 241 residues: Proteasome subunit beta type-6 (241 aa).

The propeptide occupies Met-1 to His-19.

It belongs to the peptidase T1B family. In terms of assembly, the 26S proteasome consists of a 20S proteasome core and two 19S regulatory subunits. The 20S proteasome core is composed of 28 subunits that are arranged in four stacked rings, resulting in a barrel-shaped structure. The two end rings are each formed by seven alpha subunits, and the two central rings are each formed by seven beta subunits. The catalytic chamber with the active sites is on the inside of the barrel.

It localises to the cytoplasm. The protein localises to the nucleus. Its function is as follows. Non-catalytic component of the proteasome which degrades poly-ubiquitinated proteins in the cytoplasm and in the nucleus. It is essential for the regulated turnover of proteins and for the removal of misfolded proteins. The proteasome is a multicatalytic proteinase complex that is characterized by its ability to cleave peptides with Arg, Phe, Tyr, Leu, and Glu adjacent to the leaving group at neutral or slightly basic pH. It has an ATP-dependent proteolytic activity. The chain is Proteasome subunit beta type-6 (PRE7) from Saccharomyces cerevisiae (strain ATCC 204508 / S288c) (Baker's yeast).